We begin with the raw amino-acid sequence, 281 residues long: Foldase protein PrsA (281 aa).

The N-terminal stretch at 1-18 (MKKWMMAAAVVSLMALSA) is a signal peptide. Residue Cys-19 is the site of N-palmitoyl cysteine attachment. Cys-19 is lipidated: S-diacylglycerol cysteine. The PpiC domain maps to 133-223 (KPKIRASHIL…YGYHIIKVTD (91 aa)).

The protein belongs to the PrsA family.

It localises to the cell membrane. The catalysed reaction is [protein]-peptidylproline (omega=180) = [protein]-peptidylproline (omega=0). In terms of biological role, plays a major role in protein secretion by helping the post-translocational extracellular folding of several secreted proteins. The chain is Foldase protein PrsA from Geobacillus kaustophilus (strain HTA426).